Here is a 397-residue protein sequence, read N- to C-terminus: Protochlorophyllide reductase, chloroplastic (397 aa).

The N-terminal 57 residues, 1 to 57, are a transit peptide targeting the chloroplast; sequence MALTMSAKSVSARAQVSSKAQAAPAVAVSGRTSSRVMPAPALAARSSVARTPLVVCA.

It belongs to the short-chain dehydrogenases/reductases (SDR) family. POR subfamily.

It is found in the plastid. It localises to the chloroplast. The enzyme catalyses chlorophyllide a + NADP(+) = protochlorophyllide a + NADPH + H(+). Its pathway is porphyrin-containing compound metabolism; chlorophyll biosynthesis. Phototransformation of protochlorophyllide (Pchlide) to chlorophyllide (Chlide). This is Protochlorophyllide reductase, chloroplastic (PORA) from Chlamydomonas reinhardtii (Chlamydomonas smithii).